Reading from the N-terminus, the 275-residue chain is NH(3)-dependent NAD(+) synthetase (275 aa).

46 to 53 (GISGGQDS) provides a ligand contact to ATP. Asp52 contributes to the Mg(2+) binding site. Deamido-NAD(+) is bound at residue Arg140. Thr160 contacts ATP. Glu165 is a Mg(2+) binding site. Lys173 and Asp180 together coordinate deamido-NAD(+). The ATP site is built by Lys189 and Thr211. A deamido-NAD(+)-binding site is contributed by 260 to 261 (HK).

It belongs to the NAD synthetase family. Homodimer.

It catalyses the reaction deamido-NAD(+) + NH4(+) + ATP = AMP + diphosphate + NAD(+) + H(+). It functions in the pathway cofactor biosynthesis; NAD(+) biosynthesis; NAD(+) from deamido-NAD(+) (ammonia route): step 1/1. Its function is as follows. Catalyzes the ATP-dependent amidation of deamido-NAD to form NAD. Uses ammonia as a nitrogen source. This is NH(3)-dependent NAD(+) synthetase from Salmonella arizonae (strain ATCC BAA-731 / CDC346-86 / RSK2980).